Consider the following 512-residue polypeptide: ATP synthase subunit alpha (512 aa).

Glycine 169–threonine 176 provides a ligand contact to ATP.

Belongs to the ATPase alpha/beta chains family. In terms of assembly, F-type ATPases have 2 components, CF(1) - the catalytic core - and CF(0) - the membrane proton channel. CF(1) has five subunits: alpha(3), beta(3), gamma(1), delta(1), epsilon(1). CF(0) has three main subunits: a(1), b(2) and c(9-12). The alpha and beta chains form an alternating ring which encloses part of the gamma chain. CF(1) is attached to CF(0) by a central stalk formed by the gamma and epsilon chains, while a peripheral stalk is formed by the delta and b chains.

The protein localises to the cell membrane. It catalyses the reaction ATP + H2O + 4 H(+)(in) = ADP + phosphate + 5 H(+)(out). In terms of biological role, produces ATP from ADP in the presence of a proton gradient across the membrane. The alpha chain is a regulatory subunit. This chain is ATP synthase subunit alpha, found in Buchnera aphidicola subsp. Acyrthosiphon pisum (strain 5A).